The following is a 488-amino-acid chain: MGKFLATLILFFQFCPLILGDYSPSCCTLTVGVSSYHSKPCNPAQPVCSWTLDLLALSADQALQPPCPNLVSYSSYHATYSLYLFPHWIKKPNRNGGGYYSASYSDPCSLKCPYLGCQSWTCPYTGAVSSPYWKFQQDVNFTQEVSHLNINLHFSKCGFSFSLLVDAPGYDPIWFLNTEPSQLPPTAPPLLSHSNLDHILEPSIPWKSKLLTLVQLTLQSTNYTCIVCIDRASLSTWHVLYSPNVSVPSPSSTPLLYPSLALPAPHLTLPFNWTHCFDPQIQAIVSSPCHNSLILPPFSLSPVPTLGSRSRRAVPVAVWLVSALAMGAGVAGRITGSMSLASGKSLLHEVDKDISQLTQAIVKNHKNLLKIAQYAAQNRRGLDLLFWEQGGLCKALQEQCCFLNITNSHVSILQERPPLENRVLTGWGLNWDLGLSQWAREALQTGITLVALLLLVILAGPCILRQLRHLPSRVRYPHYSLINPESSL.

Residues 1-20 (MGKFLATLILFFQFCPLILG) form the signal peptide. Topologically, residues 21-442 (DYSPSCCTLT…LGLSQWAREA (422 aa)) are extracellular. 2 N-linked (GlcNAc...) asparagine; by host glycosylation sites follow: Asn-140 and Asn-222. Positions 225–228 (CIVC) match the CXXC motif. 3 disulfides stabilise this stretch: Cys-225–Cys-228, Cys-225–Cys-401, and Cys-393–Cys-400. N-linked (GlcNAc...) asparagine; by host glycans are attached at residues Asn-244 and Asn-272. The interval 313-333 (AVPVAVWLVSALAMGAGVAGR) is fusion peptide. Coiled-coil stretches lie at residues 341–387 (ASGK…LLFW) and 397–429 (QEQCCFLNITNSHVSILQERPPLENRVLTGWGL). The immunosuppression stretch occupies residues 376–392 (AQNRRGLDLLFWEQGGL). The CX6CC signature appears at 393-401 (CKALQEQCC). N-linked (GlcNAc...) asparagine; by host glycosylation is present at Asn-404. A helical membrane pass occupies residues 443 to 463 (LQTGITLVALLLLVILAGPCI). Cys-462 is lipidated: S-palmitoyl cysteine; by host. The Cytoplasmic portion of the chain corresponds to 464–488 (LRQLRHLPSRVRYPHYSLINPESSL).

In terms of assembly, the mature envelope protein (Env) consists of a trimer of SU-TM heterodimers attached by a labile interchain disulfide bond. In terms of processing, specific enzymatic cleavages in vivo yield mature proteins. Envelope glycoproteins are synthesized as an inactive precursor that is N-glycosylated and processed likely by host cell furin or by a furin-like protease in the Golgi to yield the mature SU and TM proteins. The cleavage site between SU and TM requires the minimal sequence [KR]-X-[KR]-R. The CXXC motif is highly conserved across a broad range of retroviral envelope proteins. It is thought to participate in the formation of a labile disulfide bond possibly with the CX6CC motif present in the transmembrane protein. Isomerization of the intersubunit disulfide bond to an SU intrachain disulfide bond is thought to occur upon receptor recognition in order to allow membrane fusion. Post-translationally, the transmembrane protein is palmitoylated.

It is found in the virion membrane. It localises to the host cell membrane. In terms of biological role, the surface protein (SU) attaches the virus to the host cell by binding to its receptor. This interaction triggers the refolding of the transmembrane protein (TM) and is thought to activate its fusogenic potential by unmasking its fusion peptide. Fusion occurs at the host cell plasma membrane. Its function is as follows. The transmembrane protein (TM) acts as a class I viral fusion protein. Under the current model, the protein has at least 3 conformational states: pre-fusion native state, pre-hairpin intermediate state, and post-fusion hairpin state. During viral and target cell membrane fusion, the coiled coil regions (heptad repeats) assume a trimer-of-hairpins structure, positioning the fusion peptide in close proximity to the C-terminal region of the ectodomain. The formation of this structure appears to drive apposition and subsequent fusion of viral and target cell membranes. Membranes fusion leads to delivery of the nucleocapsid into the cytoplasm. This Homo sapiens (Human) protein is Envelope glycoprotein gp62 (env).